A 487-amino-acid polypeptide reads, in one-letter code: UPF0324 membrane protein NE0724 (487 aa).

Transmembrane regions (helical) follow at residues 19 to 38, 71 to 93, 100 to 119, 139 to 161, 181 to 200, 204 to 226, 269 to 291, 350 to 369, 389 to 411, 426 to 443, and 456 to 478; these read WAVW…LWGW, PALS…AWSM, FFIG…IIGN, LSLG…GNFF, AIVF…AGFI, VMTG…YALG, VSIL…YTAI, IWID…VWVY, FPKF…SSGS, GPMR…IGII, and ALLY…AWIF.

The protein belongs to the UPF0324 family.

It is found in the cell membrane. The polypeptide is UPF0324 membrane protein NE0724 (Nitrosomonas europaea (strain ATCC 19718 / CIP 103999 / KCTC 2705 / NBRC 14298)).